The sequence spans 309 residues: MVKVYAPASIGNVSVGFDVLGAAVSPIDGTLLGDCVSVEAAETFSLQNAGRFVSKLPDDPKENIVYQCWERFCQEIGQQIPVAMRLEKNMPIGSGLGSSACSVVAGLMAMNEFCNRPLDKMTLLGLMGELEGRISGSVHYDNVAPCYLGGLQLMLEEEGFISQEVPCFKDWLWVMAYPGIKVSTAEARAILPAQYRRQDCISHGRYLAGFIHACHTQQPRLAAKLMQDVIAEPYRTRLLPGFADARKAAQDIGALACGISGSGPTLFAVCDDGATAQRMADWLTNHYLQNDEGFVHICRLDTAGARLLG.

Position 91 to 101 (91 to 101 (PIGSGLGSSAC)) interacts with ATP.

Belongs to the GHMP kinase family. Homoserine kinase subfamily.

It is found in the cytoplasm. The catalysed reaction is L-homoserine + ATP = O-phospho-L-homoserine + ADP + H(+). It functions in the pathway amino-acid biosynthesis; L-threonine biosynthesis; L-threonine from L-aspartate: step 4/5. Catalyzes the ATP-dependent phosphorylation of L-homoserine to L-homoserine phosphate. This Serratia proteamaculans (strain 568) protein is Homoserine kinase.